The chain runs to 318 residues: Pantothenate kinase (318 aa).

96–103 (GSVAVGKS) is a binding site for ATP.

The protein belongs to the prokaryotic pantothenate kinase family.

It localises to the cytoplasm. It carries out the reaction (R)-pantothenate + ATP = (R)-4'-phosphopantothenate + ADP + H(+). It functions in the pathway cofactor biosynthesis; coenzyme A biosynthesis; CoA from (R)-pantothenate: step 1/5. This chain is Pantothenate kinase, found in Afipia carboxidovorans (strain ATCC 49405 / DSM 1227 / KCTC 32145 / OM5) (Oligotropha carboxidovorans).